A 110-amino-acid polypeptide reads, in one-letter code: UPF0339 protein YegP (110 aa).

2 tandem repeats follow at residues 10-58 and 61-109.

Belongs to the UPF0339 family. Duplicated subfamily.

The chain is UPF0339 protein YegP (yegP) from Escherichia coli (strain K12).